Reading from the N-terminus, the 150-residue chain is Flagellar assembly factor FliW (150 aa).

It belongs to the FliW family. In terms of assembly, interacts with translational regulator CsrA and flagellin(s).

Its subcellular location is the cytoplasm. Its function is as follows. Acts as an anti-CsrA protein, binds CsrA and prevents it from repressing translation of its target genes, one of which is flagellin. Binds to flagellin and participates in the assembly of the flagellum. The chain is Flagellar assembly factor FliW from Leptospira interrogans serogroup Icterohaemorrhagiae serovar Lai (strain 56601).